The chain runs to 497 residues: uncharacterized protein (497 aa).

The tract at residues 474–497 is disordered; sequence DPRNPFSNGKPSGWSDEDVAWLKR. Over residues 488-497 the composition is skewed to acidic residues; the sequence is SDEDVAWLKR.

This is an uncharacterized protein from Bacillus anthracis.